A 336-amino-acid chain; its full sequence is Ferredoxin--NADP reductase 1 (336 aa).

Positions 37, 45, 50, 90, 125, 287, and 328 each coordinate FAD.

The protein belongs to the ferredoxin--NADP reductase type 2 family. Homodimer. FAD serves as cofactor.

It catalyses the reaction 2 reduced [2Fe-2S]-[ferredoxin] + NADP(+) + H(+) = 2 oxidized [2Fe-2S]-[ferredoxin] + NADPH. This is Ferredoxin--NADP reductase 1 (ycgT) from Bacillus subtilis (strain 168).